Consider the following 646-residue polypeptide: FAD-binding monooxygenase prhK (646 aa).

Asn-46 carries N-linked (GlcNAc...) asparagine glycosylation. The chain crosses the membrane as a helical span at residues 80-97 (IIIIGAGFGGLLFAVRLI). Residues 119–122 (TWYW), 131–132 (DT), and Tyr-137 contribute to the FAD site. 129–131 (MCD) contacts NADP(+). NADP(+) contacts are provided by residues 275–281 (TGATAIQ) and 298–299 (RT). N-linked (GlcNAc...) asparagine glycans are attached at residues Asn-429, Asn-483, and Asn-529.

The protein belongs to the FAD-binding monooxygenase family. The cofactor is FAD.

The protein resides in the membrane. The enzyme catalyses preaustinoid A + AH2 + O2 = preaustinoid A1 + A + H2O. It participates in secondary metabolite biosynthesis; terpenoid biosynthesis. Its function is as follows. FAD-binding monooxygenase; part of the gene cluster that mediates the biosynthesis of paraherquonin, a meroterpenoid with a unique, highly congested hexacyclic molecular architecture. The first step of the pathway is the synthesis of 3,5-dimethylorsellinic acid (DMOA) by the polyketide synthase prhL. Synthesis of DMOA is followed by farnesylation by the prenyltransferase prhE, methylesterification by the methyl-transferase prhM, epoxidation of the prenyl chain by the flavin-dependent monooxygenase prhF, and cyclization of the farnesyl moiety by the terpene cyclase prhH, to yield the tetracyclic intermediate, protoaustinoid A. The short chain dehydrogenase prhI then oxidizes the C-3 alcohol group of the terpene cyclase product to transform protoaustinoid A into protoaustinoid B. The FAD-binding monooxygenase prhJ catalyzes the oxidation of protoaustinoid B into preaustinoid A which is further oxidized into preaustinoid A1 by FAD-binding monooxygenase phrK. Finally, prhA leads to berkeleydione via the berkeleyone B intermediate. PrhA is a multifunctional dioxygenase that first desaturates at C5-C6 to form berkeleyone B, followed by rearrangement of the A/B-ring to form the cycloheptadiene moiety in berkeleydione. Berkeleydione serves as the key intermediate for the biosynthesis of paraherquonin as well as many other meroterpenoids. The cytochrome P450 monooxygenases prhB, prhD, and prhN, as well as the isomerase prhC, are probably involved in the late stage of paraherquonin biosynthesis, after the production of berkeleydione. Especially prhC might be a multifunctional enzyme that catalyzes the D-ring expansion via intramolecular methoxy rearrangement, as well as the hydrolysis of the expanded D-ring. In Penicillium brasilianum, this protein is FAD-binding monooxygenase prhK.